Reading from the N-terminus, the 327-residue chain is Interleukin-12 subunit beta (327 aa).

The signal sequence occupies residues 1-22 (MHPQQLVVSWFSLVLLTSPIVA). The 84-residue stretch at 23–106 (IWELEKNVYV…LSRSLLLLHK (84 aa)) folds into the Ig-like C2-type domain. The cysteines at positions 50 and 90 are disulfide-linked. Residue N223 is glycosylated (N-linked (GlcNAc...) asparagine). Residues 238–327 (PPKNLQLRPL…WSEWASVSCS (90 aa)) enclose the Fibronectin type-III domain.

Belongs to the IL-12B family. In terms of assembly, heterodimer with IL12A; disulfide-linked. The heterodimer is known as interleukin IL-12. Heterodimer with IL23A; disulfide-linked. The heterodimer is known as interleukin IL-23. Also secreted as a monomer. Interacts with NBR1; this interaction promotes IL-12 secretion.

Its subcellular location is the secreted. In terms of biological role, cytokine that can act as a growth factor for activated T and NK cells, enhance the lytic activity of NK/lymphokine-activated killer cells, and stimulate the production of IFN-gamma by resting PBMC. Functionally, associates with IL23A to form the IL-23 interleukin, a heterodimeric cytokine which functions in innate and adaptive immunity. IL-23 may constitute with IL-17 an acute response to infection in peripheral tissues. IL-23 binds to a heterodimeric receptor complex composed of IL12RB1 and IL23R, activates the Jak-Stat signaling cascade, stimulates memory rather than naive T-cells and promotes production of pro-inflammatory cytokines. IL-23 induces autoimmune inflammation and thus may be responsible for autoimmune inflammatory diseases and may be important for tumorigenesis. This is Interleukin-12 subunit beta (IL12B) from Cervus elaphus (Red deer).